Consider the following 202-residue polypeptide: ATP-dependent Clp protease proteolytic subunit 3 (202 aa).

Catalysis depends on serine 93, which acts as the Nucleophile. Residue histidine 118 is part of the active site.

Belongs to the peptidase S14 family. Fourteen ClpP subunits assemble into 2 heptameric rings which stack back to back to give a disk-like structure with a central cavity, resembling the structure of eukaryotic proteasomes.

The protein resides in the cytoplasm. The enzyme catalyses Hydrolysis of proteins to small peptides in the presence of ATP and magnesium. alpha-casein is the usual test substrate. In the absence of ATP, only oligopeptides shorter than five residues are hydrolyzed (such as succinyl-Leu-Tyr-|-NHMec, and Leu-Tyr-Leu-|-Tyr-Trp, in which cleavage of the -Tyr-|-Leu- and -Tyr-|-Trp bonds also occurs).. Functionally, cleaves peptides in various proteins in a process that requires ATP hydrolysis. Has a chymotrypsin-like activity. Plays a major role in the degradation of misfolded proteins. The polypeptide is ATP-dependent Clp protease proteolytic subunit 3 (Rhodococcus jostii (strain RHA1)).